Here is a 325-residue protein sequence, read N- to C-terminus: Tetraacyldisaccharide 4'-kinase (325 aa).

Residue 55–62 (TAGGNGKT) coordinates ATP.

Belongs to the LpxK family.

It catalyses the reaction a lipid A disaccharide + ATP = a lipid IVA + ADP + H(+). It functions in the pathway glycolipid biosynthesis; lipid IV(A) biosynthesis; lipid IV(A) from (3R)-3-hydroxytetradecanoyl-[acyl-carrier-protein] and UDP-N-acetyl-alpha-D-glucosamine: step 6/6. In terms of biological role, transfers the gamma-phosphate of ATP to the 4'-position of a tetraacyldisaccharide 1-phosphate intermediate (termed DS-1-P) to form tetraacyldisaccharide 1,4'-bis-phosphate (lipid IVA). The polypeptide is Tetraacyldisaccharide 4'-kinase (Salmonella agona (strain SL483)).